Consider the following 241-residue polypeptide: Carboxy-S-adenosyl-L-methionine synthase (241 aa).

Residues tyrosine 38, 63–65 (GCS), 88–89 (DN), 116–117 (DI), asparagine 131, and arginine 198 contribute to the S-adenosyl-L-methionine site.

The protein belongs to the class I-like SAM-binding methyltransferase superfamily. Cx-SAM synthase family. Homodimer.

The enzyme catalyses prephenate + S-adenosyl-L-methionine = carboxy-S-adenosyl-L-methionine + 3-phenylpyruvate + H2O. Catalyzes the conversion of S-adenosyl-L-methionine (SAM) to carboxy-S-adenosyl-L-methionine (Cx-SAM). This Actinobacillus pleuropneumoniae serotype 7 (strain AP76) protein is Carboxy-S-adenosyl-L-methionine synthase.